A 96-amino-acid chain; its full sequence is Translation initiation factor 1A 1 (96 aa).

Residues 8 to 82 form the S1-like domain; sequence GSHDLRMPDD…EKGDITWRYE (75 aa).

The protein belongs to the eIF-1A family.

In terms of biological role, seems to be required for maximal rate of protein biosynthesis. Enhances ribosome dissociation into subunits and stabilizes the binding of the initiator Met-tRNA(I) to 40 S ribosomal subunits. The chain is Translation initiation factor 1A 1 from Haloquadratum walsbyi (strain DSM 16790 / HBSQ001).